A 458-amino-acid chain; its full sequence is tRNA modification GTPase MnmE (458 aa).

(6S)-5-formyl-5,6,7,8-tetrahydrofolate is bound by residues arginine 22, glutamate 86, and arginine 125. Residues 221-379 form the TrmE-type G domain; that stretch reads GIRTVILGRP…LEQTITEMFF (159 aa). Residue asparagine 231 participates in K(+) binding. Residues 231–236, 250–256, and 275–278 each bind GTP; these read NAGKSS, TEIAGTT, and DTAG. Mg(2+) is bound at residue serine 235. Residues threonine 250, isoleucine 252, and threonine 255 each coordinate K(+). Threonine 256 provides a ligand contact to Mg(2+). Lysine 458 is a (6S)-5-formyl-5,6,7,8-tetrahydrofolate binding site.

Belongs to the TRAFAC class TrmE-Era-EngA-EngB-Septin-like GTPase superfamily. TrmE GTPase family. In terms of assembly, homodimer. Heterotetramer of two MnmE and two MnmG subunits. It depends on K(+) as a cofactor.

It is found in the cytoplasm. Exhibits a very high intrinsic GTPase hydrolysis rate. Involved in the addition of a carboxymethylaminomethyl (cmnm) group at the wobble position (U34) of certain tRNAs, forming tRNA-cmnm(5)s(2)U34. This is tRNA modification GTPase MnmE from Lachnoclostridium phytofermentans (strain ATCC 700394 / DSM 18823 / ISDg) (Clostridium phytofermentans).